The primary structure comprises 186 residues: ATP synthase subunit delta (186 aa).

This sequence belongs to the ATPase delta chain family. As to quaternary structure, F-type ATPases have 2 components, F(1) - the catalytic core - and F(0) - the membrane proton channel. F(1) has five subunits: alpha(3), beta(3), gamma(1), delta(1), epsilon(1). F(0) has three main subunits: a(1), b(2) and c(10-14). The alpha and beta chains form an alternating ring which encloses part of the gamma chain. F(1) is attached to F(0) by a central stalk formed by the gamma and epsilon chains, while a peripheral stalk is formed by the delta and b chains.

It localises to the cell inner membrane. In terms of biological role, f(1)F(0) ATP synthase produces ATP from ADP in the presence of a proton or sodium gradient. F-type ATPases consist of two structural domains, F(1) containing the extramembraneous catalytic core and F(0) containing the membrane proton channel, linked together by a central stalk and a peripheral stalk. During catalysis, ATP synthesis in the catalytic domain of F(1) is coupled via a rotary mechanism of the central stalk subunits to proton translocation. Functionally, this protein is part of the stalk that links CF(0) to CF(1). It either transmits conformational changes from CF(0) to CF(1) or is implicated in proton conduction. The protein is ATP synthase subunit delta of Chelativorans sp. (strain BNC1).